A 184-amino-acid polypeptide reads, in one-letter code: Cytidylate kinase (184 aa).

G8 to T16 provides a ligand contact to ATP.

This sequence belongs to the cytidylate kinase family. Type 2 subfamily.

The protein localises to the cytoplasm. It catalyses the reaction CMP + ATP = CDP + ADP. The catalysed reaction is dCMP + ATP = dCDP + ADP. In Pyrobaculum arsenaticum (strain DSM 13514 / JCM 11321 / PZ6), this protein is Cytidylate kinase.